Consider the following 721-residue polypeptide: Translation initiation factor eIF2B subunit epsilon (721 aa).

Residues 1 to 13 show a composition bias toward low complexity; it reads MAAPVVAPPGVVV. A disordered region spans residues 1 to 40; it reads MAAPVVAPPGVVVSRANKRSGAGPGGSGGGGARGAEEEPP. Ala2 carries the post-translational modification N-acetylalanine. Omega-N-methylarginine is present on Arg19. Over residues 22–33 the composition is skewed to gly residues; that stretch reads AGPGGSGGGGAR. Ser27 is modified (phosphoserine). Glycyl lysine isopeptide (Lys-Gly) (interchain with G-Cter in ubiquitin) cross-links involve residues Lys61 and Lys103. Ser130 carries the phosphoserine modification. Glycyl lysine isopeptide (Lys-Gly) (interchain with G-Cter in ubiquitin) cross-links involve residues Lys141 and Lys217. Thr322 carries the post-translational modification Phosphothreonine. 2 disordered regions span residues 444–483 and 523–547; these read PEGSVISLHPPDAEEDEDDGEFSDDSGADQEKDKVKMKGY and EESESESEQSMDSEEPDSRGGSPQM. Phosphoserine occurs at positions 450, 466, 469, 532, and 540. Acidic residues-rich tracts occupy residues 456 to 471 and 523 to 537; these read AEEDEDDGEFSDDSGA and EESESESEQSMDSEE. In terms of domain architecture, W2 spans 543–720; the sequence is GSPQMDDIKV…KEAEEESSED (178 aa). Phosphoserine; by DYRK2 is present on Ser544. Ser717 is subject to Phosphoserine.

The protein belongs to the eIF-2B gamma/epsilon subunits family. Component of the translation initiation factor 2B (eIF2B) complex which is a heterodecamer of two sets of five different subunits: alpha, beta, gamma, delta and epsilon. Subunits alpha, beta and delta comprise a regulatory subcomplex and subunits epsilon and gamma comprise a catalytic subcomplex. Within the complex, the hexameric regulatory complex resides at the center, with the two heterodimeric catalytic subcomplexes bound on opposite sides. Post-translationally, phosphorylated at Ser-544 by DYRK2; this is required for subsequent phosphorylation by GSK3B. Phosphorylated on serine and threonine residues by GSK3B; phosphorylation inhibits its function. Polyubiquitinated, probably by NEDD4.

The protein resides in the cytoplasm. It localises to the cytosol. Activated by the chemical integrated stress response (ISR) inhibitor ISRIB which stimulates guanine nucleotide exchange factor activity for both phosphorylated and unphosphorylated eIF2. In terms of biological role, acts as a component of the translation initiation factor 2B (eIF2B) complex, which catalyzes the exchange of GDP for GTP on eukaryotic initiation factor 2 (eIF2) gamma subunit. Its guanine nucleotide exchange factor activity is repressed when bound to eIF2 complex phosphorylated on the alpha subunit, thereby limiting the amount of methionyl-initiator methionine tRNA available to the ribosome and consequently global translation is repressed. This Homo sapiens (Human) protein is Translation initiation factor eIF2B subunit epsilon (EIF2B5).